A 440-amino-acid chain; its full sequence is Argininosuccinate lyase (440 aa).

Belongs to the lyase 1 family. Argininosuccinate lyase subfamily.

The protein localises to the cytoplasm. It carries out the reaction 2-(N(omega)-L-arginino)succinate = fumarate + L-arginine. It functions in the pathway amino-acid biosynthesis; L-arginine biosynthesis; L-arginine from L-ornithine and carbamoyl phosphate: step 3/3. In Clostridium botulinum (strain Okra / Type B1), this protein is Argininosuccinate lyase.